The primary structure comprises 679 residues: Protein white (679 aa).

A disordered region spans residues 1-34; the sequence is MGQEDQEVLIRGGKATSTSAESLNNNNEQPYEQS. A compositionally biased stretch (polar residues) spans 15–34; that stretch reads ATSTSAESLNNNNEQPYEQS. In terms of domain architecture, ABC transporter spans 84–332; sequence NRVKGVFCNE…FSYIGATCPT (249 aa). 121 to 128 lines the ATP pocket; it reads GSSGAGKT. 5 helical membrane-spanning segments follow: residues 427-445, 457-477, 507-525, 534-555, and 568-586; these read LLQTTMVAVLIGLIFLGQQ, AIFLFLTNMTFQNSFATITVF, LPLFLVVPFLFTAIAYPLI, FFTALALVTLVANVSTSFGYLI, and VGPPVIIPFLLFGGFFLNS. N-linked (GlcNAc...) asparagine glycans are attached at residues Asn-628 and Asn-643. Residues 651–670 traverse the membrane as a helical segment; the sequence is FDFIGLALLIVGFRISAYIA.

Belongs to the ABC transporter superfamily. ABCG family. Eye pigment precursor importer (TC 3.A.1.204) subfamily.

Its subcellular location is the membrane. Functionally, may be part of a membrane-spanning permease system necessary for the transport of pigment precursors into pigment cells responsible for eye color. In Ceratitis capitata (Mediterranean fruit fly), this protein is Protein white (W).